The sequence spans 100 residues: Urease subunit gamma (100 aa).

The protein belongs to the urease gamma subunit family. As to quaternary structure, heterotrimer of UreA (gamma), UreB (beta) and UreC (alpha) subunits. Three heterotrimers associate to form the active enzyme.

The protein localises to the cytoplasm. It catalyses the reaction urea + 2 H2O + H(+) = hydrogencarbonate + 2 NH4(+). Its pathway is nitrogen metabolism; urea degradation; CO(2) and NH(3) from urea (urease route): step 1/1. The chain is Urease subunit gamma from Thermosynechococcus vestitus (strain NIES-2133 / IAM M-273 / BP-1).